Here is a 338-residue protein sequence, read N- to C-terminus: DNA-directed RNA polymerase subunit alpha (338 aa).

The tract at residues methionine 1 to asparagine 226 is alpha N-terminal domain (alpha-NTD). The segment at aspartate 240–tyrosine 338 is alpha C-terminal domain (alpha-CTD).

Belongs to the RNA polymerase alpha chain family. In terms of assembly, homodimer. The RNAP catalytic core consists of 2 alpha, 1 beta, 1 beta' and 1 omega subunit. When a sigma factor is associated with the core the holoenzyme is formed, which can initiate transcription.

The enzyme catalyses RNA(n) + a ribonucleoside 5'-triphosphate = RNA(n+1) + diphosphate. Its function is as follows. DNA-dependent RNA polymerase catalyzes the transcription of DNA into RNA using the four ribonucleoside triphosphates as substrates. The sequence is that of DNA-directed RNA polymerase subunit alpha from Nocardioides sp. (strain ATCC BAA-499 / JS614).